The chain runs to 523 residues: 2-isopropylmalate synthase (523 aa).

In terms of domain architecture, Pyruvate carboxyltransferase spans 5-267 (VIIFDTTLRD…ETGINAKEIH (263 aa)). Positions 14, 202, 204, and 238 each coordinate Mn(2+). The tract at residues 392 to 523 (KLQQLVVHSD…QQEKQVLGGV (132 aa)) is regulatory domain.

It belongs to the alpha-IPM synthase/homocitrate synthase family. LeuA type 1 subfamily. As to quaternary structure, homodimer. Mn(2+) serves as cofactor.

The protein resides in the cytoplasm. The enzyme catalyses 3-methyl-2-oxobutanoate + acetyl-CoA + H2O = (2S)-2-isopropylmalate + CoA + H(+). It functions in the pathway amino-acid biosynthesis; L-leucine biosynthesis; L-leucine from 3-methyl-2-oxobutanoate: step 1/4. Catalyzes the condensation of the acetyl group of acetyl-CoA with 3-methyl-2-oxobutanoate (2-ketoisovalerate) to form 3-carboxy-3-hydroxy-4-methylpentanoate (2-isopropylmalate). In Shewanella piezotolerans (strain WP3 / JCM 13877), this protein is 2-isopropylmalate synthase.